We begin with the raw amino-acid sequence, 667 residues long: DNA ligase (667 aa).

Residues 32–36, 81–82, and Glu111 each bind NAD(+); these read DSVYD and SL. Residue Lys113 is the N6-AMP-lysine intermediate of the active site. Arg134, Glu168, Lys285, and Lys309 together coordinate NAD(+). 4 residues coordinate Zn(2+): Cys403, Cys406, Cys421, and Cys426. The 80-residue stretch at 588–667 folds into the BRCT domain; that stretch reads VGDNPFAGKT…DNLIEQLNLI (80 aa).

Belongs to the NAD-dependent DNA ligase family. LigA subfamily. Requires Mg(2+) as cofactor. The cofactor is Mn(2+).

It carries out the reaction NAD(+) + (deoxyribonucleotide)n-3'-hydroxyl + 5'-phospho-(deoxyribonucleotide)m = (deoxyribonucleotide)n+m + AMP + beta-nicotinamide D-nucleotide.. Functionally, DNA ligase that catalyzes the formation of phosphodiester linkages between 5'-phosphoryl and 3'-hydroxyl groups in double-stranded DNA using NAD as a coenzyme and as the energy source for the reaction. It is essential for DNA replication and repair of damaged DNA. The sequence is that of DNA ligase from Lysinibacillus sphaericus (strain C3-41).